The sequence spans 350 residues: tRNA-splicing endonuclease (350 aa).

Residues Y286, H297, and K328 contribute to the active site.

It belongs to the tRNA-intron endonuclease family. Archaeal long subfamily. As to quaternary structure, homodimer.

The enzyme catalyses pretRNA = a 3'-half-tRNA molecule with a 5'-OH end + a 5'-half-tRNA molecule with a 2',3'-cyclic phosphate end + an intron with a 2',3'-cyclic phosphate and a 5'-hydroxyl terminus.. Its function is as follows. Endonuclease that removes tRNA introns. Cleaves pre-tRNA at the 5'- and 3'-splice sites to release the intron. The products are an intron and two tRNA half-molecules bearing 2',3' cyclic phosphate and 5'-OH termini. Recognizes a pseudosymmetric substrate in which 2 bulged loops of 3 bases are separated by a stem of 4 bp. The polypeptide is tRNA-splicing endonuclease (Methanosarcina acetivorans (strain ATCC 35395 / DSM 2834 / JCM 12185 / C2A)).